Consider the following 483-residue polypeptide: Aspartyl/glutamyl-tRNA(Asn/Gln) amidotransferase subunit B (483 aa).

Belongs to the GatB/GatE family. GatB subfamily. As to quaternary structure, heterotrimer of A, B and C subunits.

It catalyses the reaction L-glutamyl-tRNA(Gln) + L-glutamine + ATP + H2O = L-glutaminyl-tRNA(Gln) + L-glutamate + ADP + phosphate + H(+). The catalysed reaction is L-aspartyl-tRNA(Asn) + L-glutamine + ATP + H2O = L-asparaginyl-tRNA(Asn) + L-glutamate + ADP + phosphate + 2 H(+). Its function is as follows. Allows the formation of correctly charged Asn-tRNA(Asn) or Gln-tRNA(Gln) through the transamidation of misacylated Asp-tRNA(Asn) or Glu-tRNA(Gln) in organisms which lack either or both of asparaginyl-tRNA or glutaminyl-tRNA synthetases. The reaction takes place in the presence of glutamine and ATP through an activated phospho-Asp-tRNA(Asn) or phospho-Glu-tRNA(Gln). The protein is Aspartyl/glutamyl-tRNA(Asn/Gln) amidotransferase subunit B of Rickettsia canadensis (strain McKiel).